The following is a 169-amino-acid chain: Peptide methionine sulfoxide reductase MsrA (169 aa).

C13 is an active-site residue.

It belongs to the MsrA Met sulfoxide reductase family.

It carries out the reaction L-methionyl-[protein] + [thioredoxin]-disulfide + H2O = L-methionyl-(S)-S-oxide-[protein] + [thioredoxin]-dithiol. The catalysed reaction is [thioredoxin]-disulfide + L-methionine + H2O = L-methionine (S)-S-oxide + [thioredoxin]-dithiol. Its function is as follows. Has an important function as a repair enzyme for proteins that have been inactivated by oxidation. Catalyzes the reversible oxidation-reduction of methionine sulfoxide in proteins to methionine. In Mycolicibacterium vanbaalenii (strain DSM 7251 / JCM 13017 / BCRC 16820 / KCTC 9966 / NRRL B-24157 / PYR-1) (Mycobacterium vanbaalenii), this protein is Peptide methionine sulfoxide reductase MsrA.